The primary structure comprises 275 residues: 2,3,4,5-tetrahydropyridine-2,6-dicarboxylate N-succinyltransferase (275 aa).

Residues Arg-104 and Asp-141 each coordinate substrate.

It belongs to the transferase hexapeptide repeat family. In terms of assembly, homotrimer.

It localises to the cytoplasm. It carries out the reaction (S)-2,3,4,5-tetrahydrodipicolinate + succinyl-CoA + H2O = (S)-2-succinylamino-6-oxoheptanedioate + CoA. Its pathway is amino-acid biosynthesis; L-lysine biosynthesis via DAP pathway; LL-2,6-diaminopimelate from (S)-tetrahydrodipicolinate (succinylase route): step 1/3. The chain is 2,3,4,5-tetrahydropyridine-2,6-dicarboxylate N-succinyltransferase from Haemophilus influenzae (strain 86-028NP).